Reading from the N-terminus, the 118-residue chain is Small ribosomal subunit protein uS13 (118 aa).

The interval 94 to 118 is disordered; the sequence is GLPVRGQRTKTNARTRKGPRKPIKK.

This sequence belongs to the universal ribosomal protein uS13 family. Part of the 30S ribosomal subunit. Forms a loose heterodimer with protein S19. Forms two bridges to the 50S subunit in the 70S ribosome.

Located at the top of the head of the 30S subunit, it contacts several helices of the 16S rRNA. In the 70S ribosome it contacts the 23S rRNA (bridge B1a) and protein L5 of the 50S subunit (bridge B1b), connecting the 2 subunits; these bridges are implicated in subunit movement. Contacts the tRNAs in the A and P-sites. This Tolumonas auensis (strain DSM 9187 / NBRC 110442 / TA 4) protein is Small ribosomal subunit protein uS13.